Consider the following 480-residue polypeptide: Ribulose bisphosphate carboxylase large chain (480 aa).

Positions Met-1–Ser-2 are excised as a propeptide. Residue Pro-3 is modified to N-acetylproline. Position 14 is an N6,N6,N6-trimethyllysine (Lys-14). The substrate site is built by Asn-123 and Thr-173. Residue Lys-175 is the Proton acceptor of the active site. Substrate is bound at residue Lys-177. Mg(2+)-binding residues include Lys-201, Asp-203, and Glu-204. The residue at position 201 (Lys-201) is an N6-carboxylysine. His-294 serves as the catalytic Proton acceptor. 3 residues coordinate substrate: Arg-295, His-327, and Ser-379.

This sequence belongs to the RuBisCO large chain family. Type I subfamily. As to quaternary structure, heterohexadecamer of 8 large chains and 8 small chains; disulfide-linked. The disulfide link is formed within the large subunit homodimers. Mg(2+) serves as cofactor. In terms of processing, the disulfide bond which can form in the large chain dimeric partners within the hexadecamer appears to be associated with oxidative stress and protein turnover.

The protein localises to the plastid. It is found in the chloroplast. The enzyme catalyses 2 (2R)-3-phosphoglycerate + 2 H(+) = D-ribulose 1,5-bisphosphate + CO2 + H2O. It catalyses the reaction D-ribulose 1,5-bisphosphate + O2 = 2-phosphoglycolate + (2R)-3-phosphoglycerate + 2 H(+). Functionally, ruBisCO catalyzes two reactions: the carboxylation of D-ribulose 1,5-bisphosphate, the primary event in carbon dioxide fixation, as well as the oxidative fragmentation of the pentose substrate in the photorespiration process. Both reactions occur simultaneously and in competition at the same active site. In Mollugo verticillata (Green carpetweed), this protein is Ribulose bisphosphate carboxylase large chain.